The chain runs to 376 residues: Phosphoserine aminotransferase (376 aa).

Arginine 42 contacts L-glutamate. Positions 104, 163, 188, and 211 each coordinate pyridoxal 5'-phosphate. At lysine 212 the chain carries N6-(pyridoxal phosphate)lysine. Position 253-254 (253-254 (NT)) interacts with pyridoxal 5'-phosphate.

It belongs to the class-V pyridoxal-phosphate-dependent aminotransferase family. SerC subfamily. As to quaternary structure, homodimer. Pyridoxal 5'-phosphate serves as cofactor.

The protein resides in the cytoplasm. It carries out the reaction O-phospho-L-serine + 2-oxoglutarate = 3-phosphooxypyruvate + L-glutamate. The catalysed reaction is 4-(phosphooxy)-L-threonine + 2-oxoglutarate = (R)-3-hydroxy-2-oxo-4-phosphooxybutanoate + L-glutamate. It functions in the pathway amino-acid biosynthesis; L-serine biosynthesis; L-serine from 3-phospho-D-glycerate: step 2/3. Its pathway is cofactor biosynthesis; pyridoxine 5'-phosphate biosynthesis; pyridoxine 5'-phosphate from D-erythrose 4-phosphate: step 3/5. Functionally, catalyzes the reversible conversion of 3-phosphohydroxypyruvate to phosphoserine and of 3-hydroxy-2-oxo-4-phosphonooxybutanoate to phosphohydroxythreonine. In Bordetella avium (strain 197N), this protein is Phosphoserine aminotransferase.